Here is a 130-residue protein sequence, read N- to C-terminus: C-X-C motif chemokine 5 (130 aa).

The signal sequence occupies residues 1–37; that stretch reads MSFQLRSSARIPSRSCSSFTLLAFLLLFTLPQHRAQA. 2 disulfides stabilise this stretch: Cys50–Cys76 and Cys52–Cys93.

This sequence belongs to the intercrine alpha (chemokine CxC) family. In terms of assembly, monomer. Homodimer.

The protein resides in the secreted. In terms of biological role, may participate in the recruitment of inflammatory cells by injured or infected tissue. This Rattus norvegicus (Rat) protein is C-X-C motif chemokine 5 (Cxcl5).